We begin with the raw amino-acid sequence, 75 residues long: MTEFLFCFSCCIGEQPQPKRRRRIDRSMIGEPMNFVHTAHVGSGDTNAGFAMGGSFQDQMKSKGGYTPGISEVAL.

Residues Cys10 and Cys11 are each lipidated (S-palmitoyl cysteine). In terms of domain architecture, CRIB spans 29–42 (IGEPMNFVHTAHVG).

It belongs to the CDC42SE/SPEC family.

Its subcellular location is the cytoplasm. It localises to the cytoskeleton. The protein resides in the cell membrane. Functionally, probably involved in the organization of the actin cytoskeleton by acting downstream of CDC42, inducing actin filament assembly. The polypeptide is CDC42 small effector protein 2-B (cdc42se2-b) (Xenopus laevis (African clawed frog)).